A 389-amino-acid polypeptide reads, in one-letter code: Phospho-N-acetylmuramoyl-pentapeptide-transferase (389 aa).

Helical transmembrane passes span Phe-21–Gly-41, Gly-70–Trp-90, Phe-97–Tyr-117, Tyr-134–Ala-154, Thr-189–Gly-209, Gly-222–Thr-242, Ala-259–Phe-279, Val-286–Ile-306, Val-311–Val-331, and Gln-366–Leu-386.

Belongs to the glycosyltransferase 4 family. MraY subfamily. Requires Mg(2+) as cofactor.

The protein localises to the cell inner membrane. It catalyses the reaction UDP-N-acetyl-alpha-D-muramoyl-L-alanyl-gamma-D-glutamyl-meso-2,6-diaminopimeloyl-D-alanyl-D-alanine + di-trans,octa-cis-undecaprenyl phosphate = di-trans,octa-cis-undecaprenyl diphospho-N-acetyl-alpha-D-muramoyl-L-alanyl-D-glutamyl-meso-2,6-diaminopimeloyl-D-alanyl-D-alanine + UMP. Its pathway is cell wall biogenesis; peptidoglycan biosynthesis. Catalyzes the initial step of the lipid cycle reactions in the biosynthesis of the cell wall peptidoglycan: transfers peptidoglycan precursor phospho-MurNAc-pentapeptide from UDP-MurNAc-pentapeptide onto the lipid carrier undecaprenyl phosphate, yielding undecaprenyl-pyrophosphoryl-MurNAc-pentapeptide, known as lipid I. The protein is Phospho-N-acetylmuramoyl-pentapeptide-transferase of Janthinobacterium sp. (strain Marseille) (Minibacterium massiliensis).